A 116-amino-acid polypeptide reads, in one-letter code: Putative BPES syndrome breakpoint region protein (116 aa).

As to expression, seems to be expressed only in testis.

The polypeptide is Putative BPES syndrome breakpoint region protein (BPESC1) (Homo sapiens (Human)).